A 250-amino-acid polypeptide reads, in one-letter code: Ribosomal RNA small subunit methyltransferase J (250 aa).

S-adenosyl-L-methionine is bound by residues 101–102 (RD), 117–118 (ER), 153–154 (SS), and Asp-171.

Belongs to the methyltransferase superfamily. RsmJ family.

It localises to the cytoplasm. The catalysed reaction is guanosine(1516) in 16S rRNA + S-adenosyl-L-methionine = N(2)-methylguanosine(1516) in 16S rRNA + S-adenosyl-L-homocysteine + H(+). Functionally, specifically methylates the guanosine in position 1516 of 16S rRNA. In Shigella flexneri serotype 5b (strain 8401), this protein is Ribosomal RNA small subunit methyltransferase J.